The following is a 637-amino-acid chain: Coiled-coil domain-containing protein 22 homolog (637 aa).

Coiled coils occupy residues 322–489 (ETEI…YKQA) and 608–637 (SDRV…ETKN).

Belongs to the CCDC22 family.

The protein is Coiled-coil domain-containing protein 22 homolog of Dictyostelium discoideum (Social amoeba).